A 637-amino-acid polypeptide reads, in one-letter code: uncharacterized protein (637 aa).

Positions 7–34 (CDLCRLKKIKCSRGQPRCQTCTLFQADC) form a DNA-binding region, zn(2)-C6 fungal-type. Residues 304–327 (SLCRTLCGQACLMAQQLNLHRKQS) form a C2H2-type; degenerate zinc finger.

It is found in the nucleus. This is an uncharacterized protein from Schizosaccharomyces pombe (strain 972 / ATCC 24843) (Fission yeast).